Consider the following 231-residue polypeptide: Sensory transduction protein BceR (231 aa).

The region spanning 3–116 (KIMLIEDDHT…VLVAKIQAIL (114 aa)) is the Response regulatory domain. Aspartate 52 is modified (4-aspartylphosphate). A DNA-binding region (ompR/PhoB-type) is located at residues 127 to 225 (TQLKTWCGAT…KVGQGYMAKE (99 aa)).

In terms of processing, phosphorylated by BceS.

It localises to the cytoplasm. In terms of biological role, member of the two-component regulatory system BceS/BceR involved in the regulation of bacitracin resistance. When activated by BceS, binds to the upstream region of the bceAB promoter and up-regulates the expression of these two genes. In Halalkalibacterium halodurans (strain ATCC BAA-125 / DSM 18197 / FERM 7344 / JCM 9153 / C-125) (Bacillus halodurans), this protein is Sensory transduction protein BceR (bceR).